A 33-amino-acid polypeptide reads, in one-letter code: Pardaxin P-3 (33 aa).

This sequence belongs to the pardaxin family. In terms of assembly, in aqueous solution exists as a tetramer.

Its subcellular location is the secreted. The protein localises to the target cell membrane. Functionally, exhibits unusual shark repellent and surfactant properties. Forms voltage-dependent, ion-permeable channels in membranes. At high concentration causes cell membrane lysis. The sequence is that of Pardaxin P-3 from Pardachirus pavoninus (Peacock sole).